A 380-amino-acid chain; its full sequence is Succinyl-diaminopimelate desuccinylase (380 aa).

His-69 is a Zn(2+) binding site. The active site involves Asp-71. Asp-102 contacts Zn(2+). Glu-136 functions as the Proton acceptor in the catalytic mechanism. 3 residues coordinate Zn(2+): Glu-137, Glu-165, and His-351.

The protein belongs to the peptidase M20A family. DapE subfamily. In terms of assembly, homodimer. Requires Zn(2+) as cofactor. Co(2+) is required as a cofactor.

The enzyme catalyses N-succinyl-(2S,6S)-2,6-diaminopimelate + H2O = (2S,6S)-2,6-diaminopimelate + succinate. The protein operates within amino-acid biosynthesis; L-lysine biosynthesis via DAP pathway; LL-2,6-diaminopimelate from (S)-tetrahydrodipicolinate (succinylase route): step 3/3. In terms of biological role, catalyzes the hydrolysis of N-succinyl-L,L-diaminopimelic acid (SDAP), forming succinate and LL-2,6-diaminopimelate (DAP), an intermediate involved in the bacterial biosynthesis of lysine and meso-diaminopimelic acid, an essential component of bacterial cell walls. The protein is Succinyl-diaminopimelate desuccinylase of Bordetella petrii (strain ATCC BAA-461 / DSM 12804 / CCUG 43448).